We begin with the raw amino-acid sequence, 299 residues long: Putative hydrolase YtaP (299 aa).

It belongs to the dienelactone hydrolase family.

This Bacillus subtilis (strain 168) protein is Putative hydrolase YtaP (ytaP).